Consider the following 149-residue polypeptide: uncharacterized protein (149 aa).

To B.subtilis XkdN.

This is an uncharacterized protein from Bacillus subtilis (strain 168).